Consider the following 468-residue polypeptide: MSRGTLFDKVWDLHTVATLPSGQTQLFIGLHLIHEVTSPQAFSMLRDRGLTVKFPGRTVATVDHIVPTENQARPFADSLAEEMIVTLERNCRENGIRFYNIGSGSQGIVHVIAPEQGLTQPGMTIACGDSHTSTHGAFGAIAFGIGTSQVRDVLASQTLALSKLKVRKIEVNGELQPGVYAKDVILHIIRKLGVKGGVGYAYEFAGSTFAAMSMEERMTVCNMAIEGGARCGYVNPDQITYDYLQGREFAPQGEAWDRAIAWWESLRSEADAEYDDVVVFDAAEIAPTVTWGITPGQGIGITETIPTPDSLLDEDRAVAAEAYSYMDLEPGAPLQGTKVDVCFIGSCTNGRLSDLREAAKVAQGRKVAAGIKAFVVPGSERVKQQAEAEGLDQIFTAAGFEWRQAGCSMCLAMNPDKLEGRQISASSSNRNFKGRQGSASGRTLLMSPAMVAAAAIAGEVTDVRNWLN.

Cys347, Cys407, and Cys410 together coordinate [4Fe-4S] cluster.

The protein belongs to the aconitase/IPM isomerase family. LeuC type 1 subfamily. In terms of assembly, heterodimer of LeuC and LeuD. [4Fe-4S] cluster serves as cofactor.

It carries out the reaction (2R,3S)-3-isopropylmalate = (2S)-2-isopropylmalate. It functions in the pathway amino-acid biosynthesis; L-leucine biosynthesis; L-leucine from 3-methyl-2-oxobutanoate: step 2/4. In terms of biological role, catalyzes the isomerization between 2-isopropylmalate and 3-isopropylmalate, via the formation of 2-isopropylmaleate. The polypeptide is 3-isopropylmalate dehydratase large subunit (Synechococcus elongatus (strain ATCC 33912 / PCC 7942 / FACHB-805) (Anacystis nidulans R2)).